Here is a 540-residue protein sequence, read N- to C-terminus: MLRMDTVHRDKGQVVILKKTNYLPYLVNLFIPKLFYPEKIVVARLYINVNKHDKHAAENFKGTETPCFDVPPSLFSDKVPMDKIVFLPTVMLPMGFEAGGVFGPGVLTRRSYPIDLKAAGHKGQTPPLFVGLRMDIQAPTRVKSLLKEVRESQPAQDILMNWVRASNNLINGEQPKEQELRDEFSLSMVFNLPTPPSPPSPYPYGRIPLQFNIYTPDLSNVLLLMSHQRDLTVAILSTVNNPHVPSVAFAAMGDEEECPKFELPLSAFPTFEGVNRPMFLPKRFMPKGFEAGCVLKPGALSDRWFMDNIGRFGPTQPQHNGSITPPLFVGKICREEPTVDMIRNIQLEIEKKASEDATLPAVKPKIDISITKGFMVMETAAEDPKPPKGAYSVQSYEEAFDDGCVVKVAKKVATEATDTRGRDEIRTSCDQPQEKDEGSAEADKKHLSCFHVDSDIDNIAMAMARMGVADISLPAEGEAMPGIDGDRALIQLSHVLEDRNQIRSHTDQLMQDHIFRMNRNRMLALRQPFTCIGCGTQENK.

Residues 416-443 (ATDTRGRDEIRTSCDQPQEKDEGSAEAD) are disordered. Residues 417-443 (TDTRGRDEIRTSCDQPQEKDEGSAEAD) show a composition bias toward basic and acidic residues.

Belongs to the DM7 family.

The protein is DM7 family protein GM11956 of Drosophila sechellia (Fruit fly).